Here is a 340-residue protein sequence, read N- to C-terminus: Phosphoribosylformylglycinamidine cyclo-ligase (340 aa).

The protein belongs to the AIR synthase family.

The protein resides in the cytoplasm. It catalyses the reaction 2-formamido-N(1)-(5-O-phospho-beta-D-ribosyl)acetamidine + ATP = 5-amino-1-(5-phospho-beta-D-ribosyl)imidazole + ADP + phosphate + H(+). The protein operates within purine metabolism; IMP biosynthesis via de novo pathway; 5-amino-1-(5-phospho-D-ribosyl)imidazole from N(2)-formyl-N(1)-(5-phospho-D-ribosyl)glycinamide: step 2/2. This is Phosphoribosylformylglycinamidine cyclo-ligase from Macrococcus caseolyticus (strain JCSC5402) (Macrococcoides caseolyticum).